Here is a 335-residue protein sequence, read N- to C-terminus: Aspartate--ammonia ligase (335 aa).

It belongs to the class-II aminoacyl-tRNA synthetase family. AsnA subfamily.

It localises to the cytoplasm. It catalyses the reaction L-aspartate + NH4(+) + ATP = L-asparagine + AMP + diphosphate + H(+). The protein operates within amino-acid biosynthesis; L-asparagine biosynthesis; L-asparagine from L-aspartate (ammonia route): step 1/1. The chain is Aspartate--ammonia ligase from Pediococcus pentosaceus (strain ATCC 25745 / CCUG 21536 / LMG 10740 / 183-1w).